A 297-amino-acid polypeptide reads, in one-letter code: Probable endonuclease 4 (297 aa).

Positions 69, 110, 145, 179, 182, 214, 227, 229, and 259 each coordinate Zn(2+).

The protein belongs to the AP endonuclease 2 family. It depends on Zn(2+) as a cofactor.

It carries out the reaction Endonucleolytic cleavage to 5'-phosphooligonucleotide end-products.. Its function is as follows. Endonuclease IV plays a role in DNA repair. It cleaves phosphodiester bonds at apurinic or apyrimidinic (AP) sites, generating a 3'-hydroxyl group and a 5'-terminal sugar phosphate. The protein is Probable endonuclease 4 of Listeria monocytogenes serotype 4b (strain F2365).